A 325-amino-acid polypeptide reads, in one-letter code: Beta-1,3-galactosyltransferase brn (325 aa).

Residues 1–7 (MQSKHRK) lie on the Cytoplasmic side of the membrane. A helical; Signal-anchor for type II membrane protein membrane pass occupies residues 8–28 (LLLRCLLVLPLILLVDYCGLL). Residues 29 to 325 (THLHELNFER…WNECRSANYA (297 aa)) are Lumenal-facing. Asn149 and Asn166 each carry an N-linked (GlcNAc...) asparagine glycan.

This sequence belongs to the glycosyltransferase 31 family.

It localises to the golgi apparatus membrane. The catalysed reaction is a ganglioside GM2 (d18:1(4E)) + UDP-alpha-D-galactose = a ganglioside GM1 (d18:1(4E)) + UDP + H(+). Its function is as follows. Neurogenic protein essential for the development and maintenance of epithelial structure. Required in the germline for establishing the follicular epithelium and for determining the dorsal-ventral polarity. Collaborates with Notch on the apical surface of follicle cells to mediate germline-follicle cell adhesion. Brn has a role in chorion formation. The protein is Beta-1,3-galactosyltransferase brn (brn) of Drosophila melanogaster (Fruit fly).